Here is a 325-residue protein sequence, read N- to C-terminus: Glutarate 2-hydroxylase (325 aa).

Histidine 160, aspartate 162, and histidine 292 together coordinate Fe cation.

The protein belongs to the glutarate hydroxylase family. As to quaternary structure, homotetramer. Requires Fe(2+) as cofactor.

The enzyme catalyses glutarate + 2-oxoglutarate + O2 = (S)-2-hydroxyglutarate + succinate + CO2. It participates in amino-acid degradation. Functionally, acts as an alpha-ketoglutarate-dependent dioxygenase catalyzing hydroxylation of glutarate (GA) to L-2-hydroxyglutarate (L2HG). Functions in a L-lysine degradation pathway that proceeds via cadaverine, glutarate and L-2-hydroxyglutarate. The polypeptide is Glutarate 2-hydroxylase (Citrobacter koseri (strain ATCC BAA-895 / CDC 4225-83 / SGSC4696)).